The primary structure comprises 560 residues: Glutamate--tRNA ligase, chloroplastic/mitochondrial (560 aa).

Residue 47–49 (RFA) coordinates L-glutamate. The short motif at 50–60 (PSPTGNLHVGG) is the 'HIGH' region element. Histidine 57 is a binding site for ATP. Residues glutamate 83, 235–239 (YNFCV), and arginine 253 contribute to the L-glutamate site. Residues glutamate 256 and 291–295 (KLSKR) contribute to the ATP site. The 'KMSKS' region signature appears at 291-295 (KLSKR).

It belongs to the class-I aminoacyl-tRNA synthetase family. Glutamate--tRNA ligase type 1 subfamily.

The protein resides in the plastid. It is found in the chloroplast. The protein localises to the mitochondrion. The enzyme catalyses tRNA(Glu) + L-glutamate + ATP = L-glutamyl-tRNA(Glu) + AMP + diphosphate. In terms of biological role, catalyzes the attachment of glutamate to tRNA(Glu) in a two-step reaction: glutamate is first activated by ATP to form Glu-AMP and then transferred to the acceptor end of tRNA(Glu). This chain is Glutamate--tRNA ligase, chloroplastic/mitochondrial, found in Hordeum vulgare (Barley).